The sequence spans 451 residues: tRNA-2-methylthio-N(6)-dimethylallyladenosine synthase (451 aa).

In terms of domain architecture, MTTase N-terminal spans 10–128 (KKFYTLTFGC…FPQLLEHVMQ (119 aa)). Cysteine 19, cysteine 55, cysteine 89, cysteine 165, cysteine 169, and cysteine 172 together coordinate [4Fe-4S] cluster. Positions 151–381 (REDSIKAWVV…ISVQQEISEQ (231 aa)) constitute a Radical SAM core domain. Residues 384–447 (KDLENTVQRI…SWNLYGEIFE (64 aa)) enclose the TRAM domain.

It belongs to the methylthiotransferase family. MiaB subfamily. As to quaternary structure, monomer. The cofactor is [4Fe-4S] cluster.

The protein resides in the cytoplasm. It carries out the reaction N(6)-dimethylallyladenosine(37) in tRNA + (sulfur carrier)-SH + AH2 + 2 S-adenosyl-L-methionine = 2-methylsulfanyl-N(6)-dimethylallyladenosine(37) in tRNA + (sulfur carrier)-H + 5'-deoxyadenosine + L-methionine + A + S-adenosyl-L-homocysteine + 2 H(+). In terms of biological role, catalyzes the methylthiolation of N6-(dimethylallyl)adenosine (i(6)A), leading to the formation of 2-methylthio-N6-(dimethylallyl)adenosine (ms(2)i(6)A) at position 37 in tRNAs that read codons beginning with uridine. This is tRNA-2-methylthio-N(6)-dimethylallyladenosine synthase from Natranaerobius thermophilus (strain ATCC BAA-1301 / DSM 18059 / JW/NM-WN-LF).